The primary structure comprises 408 residues: MTQAELAPSLNTLDFDKKPEETRVVVAMSGGVDSSVVAGLLKQQGYDVLGITLQLYDHGAAVHRAGSCCAGQDIDDARRVCETLGIPHYVLDYEKRFRETVINPFAESYVAGETPIPCVSCNQTVKFADLLATAKELGADALATGHYIRSGRNPSPENPGRRALFRPADADRDQSYFLFATTQEQIDYLRFPLGGLPKAETRRLAEEMGLVVAKKADSQDICFVPQGKYSDVITKLKPNAALAGEIVHLDGRVLGTHEGILHFTIGQRRGIGIATGEPLYVVFLDARSRRVIVGPKEALETHRVYLRDVNWLGDETLAEAAAGKGFACYAKVRSTRAPAPAVLHIDATGTYVDLTVGEAGIAPGQACALYSAPGDNARVFGGGFIERSEREPSAEACLKALLASPVAA.

ATP contacts are provided by residues 27-34 (AMSGGVDS) and Leu53. The Nucleophile role is filled by Cys121. Cysteines 121 and 222 form a disulfide. Gly145 contacts ATP. The interaction with tRNA stretch occupies residues 172–174 (RDQ). Residue Cys222 is the Cysteine persulfide intermediate of the active site.

This sequence belongs to the MnmA/TRMU family.

The protein resides in the cytoplasm. It carries out the reaction S-sulfanyl-L-cysteinyl-[protein] + uridine(34) in tRNA + AH2 + ATP = 2-thiouridine(34) in tRNA + L-cysteinyl-[protein] + A + AMP + diphosphate + H(+). In terms of biological role, catalyzes the 2-thiolation of uridine at the wobble position (U34) of tRNA, leading to the formation of s(2)U34. The chain is tRNA-specific 2-thiouridylase MnmA from Rhizobium johnstonii (strain DSM 114642 / LMG 32736 / 3841) (Rhizobium leguminosarum bv. viciae).